The following is a 179-amino-acid chain: Putative undecaprenyl-phosphate N-acetylgalactosaminyl 1-phosphate transferase (179 aa).

A helical transmembrane segment spans residues 39–59 (IWFALIGLAIALPMIAVFSIL).

The protein belongs to the bacterial sugar transferase family.

It localises to the cell membrane. The catalysed reaction is di-trans,octa-cis-undecaprenyl phosphate + UDP-N-acetyl-alpha-D-galactosamine = N-acetyl-alpha-D-galactosaminyl-di-trans,octa-cis-undecaprenyl diphosphate + UMP. It participates in cell wall biogenesis; teichuronic acid biosynthesis. In terms of biological role, might mediate the very first reaction in teichuronic synthesis, i.e. the formation of lipid-linked N-acetylglucosamine. The sequence is that of Putative undecaprenyl-phosphate N-acetylgalactosaminyl 1-phosphate transferase (tuaA) from Bacillus subtilis (strain 168).